A 113-amino-acid chain; its full sequence is Putative anti-sigma factor antagonist TM1081 homolog (113 aa).

The STAS domain maps to 1-110 (MFPYKIVEDV…DTISEALEEV (110 aa)). Ser55 is modified (phosphoserine).

Belongs to the anti-sigma-factor antagonist family. In terms of processing, phosphorylated on a serine residue.

In terms of biological role, in the phosphorylated form it could act as an anti-anti-sigma factor that counteracts an anti-sigma factor and thus releases a sigma factor from inhibition. This chain is Putative anti-sigma factor antagonist TM1081 homolog, found in Thermotoga neapolitana.